The chain runs to 153 residues: Probable histone H2A.2 (153 aa).

Disordered regions lie at residues 1-24 and 127-153; these read MDASTKTKKGAGGRKGGGPRKKSV and KKTERSNTVSKEPKSPKPKAGKSPKKA. Basic and acidic residues predominate over residues 127-141; the sequence is KKTERSNTVSKEPKS. Positions 142–153 are enriched in basic residues; the sequence is PKPKAGKSPKKA. The SPKK motif signature appears at 149 to 152; it reads SPKK.

The protein belongs to the histone H2A family. In terms of assembly, the nucleosome is a histone octamer containing two molecules each of H2A, H2B, H3 and H4 assembled in one H3-H4 heterotetramer and two H2A-H2B heterodimers. The octamer wraps approximately 147 bp of DNA.

It localises to the nucleus. Its subcellular location is the chromosome. Functionally, core component of nucleosome. Nucleosomes wrap and compact DNA into chromatin, limiting DNA accessibility to the cellular machineries which require DNA as a template. Histones thereby play a central role in transcription regulation, DNA repair, DNA replication and chromosomal stability. DNA accessibility is regulated via a complex set of post-translational modifications of histones, also called histone code, and nucleosome remodeling. This chain is Probable histone H2A.2, found in Medicago truncatula (Barrel medic).